A 129-amino-acid polypeptide reads, in one-letter code: Large ribosomal subunit protein bL12 (129 aa).

It belongs to the bacterial ribosomal protein bL12 family. As to quaternary structure, homodimer. Part of the ribosomal stalk of the 50S ribosomal subunit. Forms a multimeric L10(L12)X complex, where L10 forms an elongated spine to which 2 to 4 L12 dimers bind in a sequential fashion. Binds GTP-bound translation factors.

Forms part of the ribosomal stalk which helps the ribosome interact with GTP-bound translation factors. Is thus essential for accurate translation. The protein is Large ribosomal subunit protein bL12 of Treponema denticola (strain ATCC 35405 / DSM 14222 / CIP 103919 / JCM 8153 / KCTC 15104).